The chain runs to 852 residues: Lon protease homolog 2, peroxisomal (852 aa).

Serine 2 bears the N-acetylserine mark. In terms of domain architecture, Lon N-terminal spans 13 to 222 (LPLLLTHEGV…MTIPLLVRQI (210 aa)). 375 to 382 (GPPGVGKT) is an ATP binding site. One can recognise a Lon proteolytic domain in the interval 651–837 (LSQPGVAIGL…DEVLNAAFDG (187 aa)). Active-site residues include serine 743 and lysine 786. Residues 850–852 (SKL) carry the Microbody targeting signal motif.

The protein belongs to the peptidase S16 family. As to quaternary structure, interacts with PEX5. Interacts with TYSND1. May interact with enzymes involved in beta-oxidation of fatty acids, including ACOX1/AOX.

The protein localises to the peroxisome matrix. The catalysed reaction is Hydrolysis of proteins in presence of ATP.. ATP-dependent serine protease that mediates the selective degradation of misfolded and unassembled polypeptides in the peroxisomal matrix. Necessary for type 2 peroxisome targeting signal (PTS2)-containing protein processing and facilitates peroxisome matrix protein import. May indirectly regulate peroxisomal fatty acid beta-oxidation through degradation of the self-processed forms of TYSND1. The polypeptide is Lon protease homolog 2, peroxisomal (Pongo abelii (Sumatran orangutan)).